Here is a 79-residue protein sequence, read N- to C-terminus: MGMRMMFTVFLLVVLATTVVSIPSDRASDGRNAVVHERAPELVVTATTNCCGYNPMTICPPCMCTYSCPPKRKPGRRND.

The signal sequence occupies residues 1 to 21; the sequence is MGMRMMFTVFLLVVLATTVVS. The propeptide occupies 22-38; that stretch reads IPSDRASDGRNAVVHER. Proline 40 carries the post-translational modification 4-hydroxyproline. Residue glutamate 41 is modified to 4-carboxyglutamate. O-linked (HexNAc...) threonine glycosylation is found at threonine 45 and threonine 47. 4-hydroxyproline occurs at positions 55, 60, 61, 69, 70, and 74. Position 74 is a proline amide (proline 74). The propeptide occupies 75 to 79; it reads GRRND.

O-linked glycan consists of Hex4-HexNAc2 hexasaccharide. In terms of processing, contains 3 disulfide bonds. As to expression, expressed by the venom duct.

It localises to the secreted. Its function is as follows. Probable neurotoxin with ion channel inhibitor activity. The polypeptide is Conotoxin MIVA (Conus magus (Magical cone)).